A 150-amino-acid polypeptide reads, in one-letter code: UPF0260 protein VIBHAR_03078 (150 aa).

Belongs to the UPF0260 family.

The chain is UPF0260 protein VIBHAR_03078 from Vibrio campbellii (strain ATCC BAA-1116).